The following is a 257-amino-acid chain: NAD-capped RNA hydrolase NudC (257 aa).

R69 provides a ligand contact to substrate. C98 and C101 together coordinate Zn(2+). Residue E111 participates in substrate binding. Residues C116 and C119 each coordinate Zn(2+). Y124 is a binding site for substrate. The Nudix hydrolase domain maps to 125-248 (PQIAPCIIVA…TVARRLIEDT (124 aa)). A divalent metal cation is bound by residues A158, E174, and E178. The short motif at 159–180 (GFVEVGETLEQAVAREVMEESG) is the Nudix box element. 192-199 (QPWPFPQS) contributes to the substrate binding site. E219 lines the a divalent metal cation pocket. A241 is a substrate binding site.

The protein belongs to the Nudix hydrolase family. NudC subfamily. As to quaternary structure, homodimer. Mg(2+) serves as cofactor. The cofactor is Mn(2+). Zn(2+) is required as a cofactor.

It catalyses the reaction a 5'-end NAD(+)-phospho-ribonucleoside in mRNA + H2O = a 5'-end phospho-adenosine-phospho-ribonucleoside in mRNA + beta-nicotinamide D-ribonucleotide + 2 H(+). The catalysed reaction is NAD(+) + H2O = beta-nicotinamide D-ribonucleotide + AMP + 2 H(+). It carries out the reaction NADH + H2O = reduced beta-nicotinamide D-ribonucleotide + AMP + 2 H(+). MRNA decapping enzyme that specifically removes the nicotinamide adenine dinucleotide (NAD) cap from a subset of mRNAs by hydrolyzing the diphosphate linkage to produce nicotinamide mononucleotide (NMN) and 5' monophosphate mRNA. The NAD-cap is present at the 5'-end of some mRNAs and stabilizes RNA against 5'-processing. Has preference for mRNAs with a 5'-end purine. Catalyzes the hydrolysis of a broad range of dinucleotide pyrophosphates. This is NAD-capped RNA hydrolase NudC from Salmonella choleraesuis (strain SC-B67).